The chain runs to 78 residues: Large ribosomal subunit protein bL31 (78 aa).

Positions 16, 18, 38, and 41 each coordinate Zn(2+).

This sequence belongs to the bacterial ribosomal protein bL31 family. Type A subfamily. In terms of assembly, part of the 50S ribosomal subunit. Requires Zn(2+) as cofactor.

Functionally, binds the 23S rRNA. This Frankia alni (strain DSM 45986 / CECT 9034 / ACN14a) protein is Large ribosomal subunit protein bL31.